The chain runs to 359 residues: MKAIDINVKEKSYKISIKKGILSSIGERLKTTYQSRNIVVITDTNVEKFYMETLKNSLLESGFTMKIISIEPGEKSKNLATLERVYEKLCEFQIRRKDIIISLGGGVVGDLSGFAASTYLRGINYIQVPTSLLAQVDSSIGGKVAVDLPWGKNLVGSFYHPDAVFIDPDVLLSLNDKFFSDGMGEVIKYGFIKDKSILNLLDSCKDKDEVLQYIEDIIYKCCSIKKHLVEKDERDLGERMMLNFGHTLAHGIEKYYNYGKYSHGEAVAIGMTYMTNITERMDITKKGTHDYMKGILTKYGLPVNMPDMDKQALVNSIALDKKSSGDRINIIVIEEAGICKIMKIKLREVYGFLFPEDII.

NAD(+) is bound by residues 106 to 110, 130 to 131, lysine 143, and lysine 152; these read GVVGD and TS. Zn(2+)-binding residues include glutamate 185, histidine 246, and histidine 263.

The protein belongs to the sugar phosphate cyclases superfamily. Dehydroquinate synthase family. The cofactor is Co(2+). Zn(2+) is required as a cofactor. It depends on NAD(+) as a cofactor.

It is found in the cytoplasm. It carries out the reaction 7-phospho-2-dehydro-3-deoxy-D-arabino-heptonate = 3-dehydroquinate + phosphate. Its pathway is metabolic intermediate biosynthesis; chorismate biosynthesis; chorismate from D-erythrose 4-phosphate and phosphoenolpyruvate: step 2/7. Catalyzes the conversion of 3-deoxy-D-arabino-heptulosonate 7-phosphate (DAHP) to dehydroquinate (DHQ). The chain is 3-dehydroquinate synthase from Clostridium kluyveri (strain ATCC 8527 / DSM 555 / NBRC 12016 / NCIMB 10680 / K1).